A 164-amino-acid chain; its full sequence is Cell division protein SepF (164 aa).

Residues 21 to 71 (YQQGQQPAQQQQSPVQAVPTPVPAPQQQAKRAPVTPLHKPSTTTRNAAPAE) form a disordered region. Low complexity predominate over residues 22–49 (QQGQQPAQQQQSPVQAVPTPVPAPQQQA).

The protein belongs to the SepF family. In terms of assembly, homodimer. Interacts with FtsZ.

Its subcellular location is the cytoplasm. Cell division protein that is part of the divisome complex and is recruited early to the Z-ring. Probably stimulates Z-ring formation, perhaps through the cross-linking of FtsZ protofilaments. Its function overlaps with FtsA. The sequence is that of Cell division protein SepF from Clavibacter sepedonicus (Clavibacter michiganensis subsp. sepedonicus).